The sequence spans 156 residues: Ribosomal RNA large subunit methyltransferase H (156 aa).

S-adenosyl-L-methionine-binding positions include Leu73, Gly104, and 123 to 128 (LSPLTL).

Belongs to the RNA methyltransferase RlmH family. In terms of assembly, homodimer.

It is found in the cytoplasm. It carries out the reaction pseudouridine(1915) in 23S rRNA + S-adenosyl-L-methionine = N(3)-methylpseudouridine(1915) in 23S rRNA + S-adenosyl-L-homocysteine + H(+). Specifically methylates the pseudouridine at position 1915 (m3Psi1915) in 23S rRNA. This chain is Ribosomal RNA large subunit methyltransferase H, found in Serratia proteamaculans (strain 568).